Consider the following 540-residue polypeptide: Fumonisin B1 esterase (540 aa).

Serine 240 serves as the catalytic Acyl-ester intermediate. Residues glutamate 356 and histidine 448 each act as charge relay system in the active site. Positions 521 to 540 (QVGSGEGLGVSPSKACQPSK) are disordered.

This sequence belongs to the type-B carboxylesterase/lipase family.

The enzyme catalyses fumonisin B1 + 2 H2O = 2 tricarballylate + (2S,3S,5R,10R,12S,14S,15R,16R)-2-amino-12,16-dimethylicosane-3,5,10,14,15-pentol + 2 H(+). In terms of biological role, involved in degradation of fumonisin B1. Catalyzes the hydrolysis of fumonisin B1 (FB1) to aminopentol (HFB1). The chain is Fumonisin B1 esterase (fumD) from Sphingopyxis macrogoltabida (Sphingomonas macrogoltabidus).